The sequence spans 394 residues: Mitogen-activated protein kinase 2 (394 aa).

Over residues 1-10 the composition is skewed to polar residues; the sequence is MDGPAQQTDT. Residues 1 to 27 are disordered; the sequence is MDGPAQQTDTVMAEAAAAQQPAPPSQP. The region spanning 61–346 is the Protein kinase domain; sequence KPPIMPIGKG…VEDALAHPYL (286 aa). Residues 67–75 and lysine 90 each bind ATP; that span reads IGKGAYGIV. The active-site Proton acceptor is aspartate 187. Threonine 219 bears the Phosphothreonine mark. A TXY motif is present at residues 219–221; sequence TEY. Tyrosine 221 carries the post-translational modification Phosphotyrosine. Residue threonine 224 is modified to Phosphothreonine.

The protein belongs to the protein kinase superfamily. CMGC Ser/Thr protein kinase family. MAP kinase subfamily. The cofactor is Mg(2+). Post-translationally, activated by cold, wounding and UV-C in a cultivar-dependent manner; phosphorylated at Tyr-221 in cv. Subicho but not in cv. Pungchon. As to expression, expressed constitutively in roots, stems, flowers and fruits of the hot pepper (cv. Subicho).

It catalyses the reaction L-seryl-[protein] + ATP = O-phospho-L-seryl-[protein] + ADP + H(+). The enzyme catalyses L-threonyl-[protein] + ATP = O-phospho-L-threonyl-[protein] + ADP + H(+). Its activity is regulated as follows. Activated by threonine and tyrosine phosphorylation. Its function is as follows. Protein kinase involved in oxidative stress-mediated and innate immune MAP kinase signaling cascades. This Capsicum annuum (Capsicum pepper) protein is Mitogen-activated protein kinase 2.